Reading from the N-terminus, the 181-residue chain is Large ribosomal subunit protein uL5 (181 aa).

It belongs to the universal ribosomal protein uL5 family. Part of the 50S ribosomal subunit; part of the 5S rRNA/L5/L18/L25 subcomplex. Contacts the 5S rRNA and the P site tRNA. Forms a bridge to the 30S subunit in the 70S ribosome.

Its function is as follows. This is one of the proteins that bind and probably mediate the attachment of the 5S RNA into the large ribosomal subunit, where it forms part of the central protuberance. In the 70S ribosome it contacts protein S13 of the 30S subunit (bridge B1b), connecting the 2 subunits; this bridge is implicated in subunit movement. Contacts the P site tRNA; the 5S rRNA and some of its associated proteins might help stabilize positioning of ribosome-bound tRNAs. In Trichodesmium erythraeum (strain IMS101), this protein is Large ribosomal subunit protein uL5.